The following is a 71-amino-acid chain: Small ribosomal subunit protein eS17 (71 aa).

It belongs to the eukaryotic ribosomal protein eS17 family.

The chain is Small ribosomal subunit protein eS17 from Pyrobaculum neutrophilum (strain DSM 2338 / JCM 9278 / NBRC 100436 / V24Sta) (Thermoproteus neutrophilus).